Reading from the N-terminus, the 367-residue chain is MTASQRTLMVMAGGTGGHVFPGLAVAHRMEAAGWRVVWLGNPAGMEATLVPKHGIPMEYVRFGGLRGKGLKTKLTLPVNLLRACWQSLGALRRVRPDVVLGMGGYITFPAGVMTALSGRPLVLHEQNSIAGLTNKVLAKLAKRVLVAFPGALPHAEWTGNPIRAELAHTEPPQARYASRGGPLNVLVVGGSLGAAALNEVVPRALALLAPGERPRVVHQAGVKHIEALKANYEAAGFAAGEDVRLVPFIDDMAAAYAAADLVICRSGAMTVSEIAAVGVAALFVPFPHAVDDHQTTNAAFLADAGAAVLVQQRDLSAELLADWLRGQSRASLADMAERSRSLAKPEATDEVARVCAKAAGANLEQLQ.

UDP-N-acetyl-alpha-D-glucosamine-binding positions include 15 to 17 (TGG), Asn127, Arg163, Ser191, Ile249, and Gln294.

The protein belongs to the glycosyltransferase 28 family. MurG subfamily.

It localises to the cell inner membrane. It catalyses the reaction di-trans,octa-cis-undecaprenyl diphospho-N-acetyl-alpha-D-muramoyl-L-alanyl-D-glutamyl-meso-2,6-diaminopimeloyl-D-alanyl-D-alanine + UDP-N-acetyl-alpha-D-glucosamine = di-trans,octa-cis-undecaprenyl diphospho-[N-acetyl-alpha-D-glucosaminyl-(1-&gt;4)]-N-acetyl-alpha-D-muramoyl-L-alanyl-D-glutamyl-meso-2,6-diaminopimeloyl-D-alanyl-D-alanine + UDP + H(+). It functions in the pathway cell wall biogenesis; peptidoglycan biosynthesis. Functionally, cell wall formation. Catalyzes the transfer of a GlcNAc subunit on undecaprenyl-pyrophosphoryl-MurNAc-pentapeptide (lipid intermediate I) to form undecaprenyl-pyrophosphoryl-MurNAc-(pentapeptide)GlcNAc (lipid intermediate II). The chain is UDP-N-acetylglucosamine--N-acetylmuramyl-(pentapeptide) pyrophosphoryl-undecaprenol N-acetylglucosamine transferase from Burkholderia cenocepacia (strain ATCC BAA-245 / DSM 16553 / LMG 16656 / NCTC 13227 / J2315 / CF5610) (Burkholderia cepacia (strain J2315)).